We begin with the raw amino-acid sequence, 176 residues long: tRNA (adenine(37)-N6)-methyltransferase (176 aa).

One can recognise a TsaA-like domain in the interval 1–94; the sequence is SFSHIWVQFV…YLPFVEAQPD (94 aa). Residues His-12, 12-13, Arg-40, Leu-50, and 74-77 contribute to the S-adenosyl-L-methionine site; these read HG and LDGT.

Belongs to the tRNA methyltransferase O family.

The catalysed reaction is N(6)-L-threonylcarbamoyladenosine(37) in tRNA + S-adenosyl-L-methionine = N(6)-methyl,N(6)-L-threonylcarbamoyladenosine(37) in tRNA + S-adenosyl-L-homocysteine + H(+). Functionally, S-adenosyl-L-methionine-dependent methyltransferase responsible for the addition of the methyl group in the formation of N6-methyl-N6-threonylcarbamoyladenosine at position 37 (m(6)t(6)A37) of the tRNA anticodon loop of tRNA(Thr)(GGU). The methyl group of m(6)t(6)A37 appears to slightly improve the efficiency of the tRNA decoding ability. Binds to tRNA. The protein is tRNA (adenine(37)-N6)-methyltransferase of Eikenella corrodens.